The primary structure comprises 96 residues: uncharacterized protein (96 aa).

This is an uncharacterized protein from Homo sapiens (Human).